Here is a 60-residue protein sequence, read N- to C-terminus: Large ribosomal subunit protein uL30 (60 aa).

The protein belongs to the universal ribosomal protein uL30 family. Part of the 50S ribosomal subunit.

This is Large ribosomal subunit protein uL30 from Flavobacterium johnsoniae (strain ATCC 17061 / DSM 2064 / JCM 8514 / BCRC 14874 / CCUG 350202 / NBRC 14942 / NCIMB 11054 / UW101) (Cytophaga johnsonae).